Reading from the N-terminus, the 564-residue chain is Kelch repeat and BTB domain-containing protein A55 (564 aa).

Positions 21–88 constitute a BTB domain; the sequence is CDISIVINDE…IYGIPLSLTN (68 aa). 6 Kelch repeats span residues 252–297, 298–346, 347–395, 397–441, 442–492, and 494–539; these read IELI…VLDN, IIYM…ADDE, YIYC…MLNG, IYVM…VHDG, KIYI…SAHN, and LYVG…CEPI.

The protein belongs to the poxviruses A55 protein family. In terms of assembly, interacts (via BTB domain) with host CUL3.

It is found in the host cytoplasm. Functionally, probable substrate-specific adapter of CUL3-containing E3 ubiquitin-protein ligases which mediate the ubiquitination and subsequent proteasomal degradation of host target proteins. The polypeptide is Kelch repeat and BTB domain-containing protein A55 (KBTB1) (Bos taurus (Bovine)).